The primary structure comprises 286 residues: Release factor glutamine methyltransferase (286 aa).

S-adenosyl-L-methionine contacts are provided by residues 120–124, Asp143, Trp172, and Asn187; that span reads GTGSG. Substrate is bound at residue 187 to 190; sequence NPPY.

It belongs to the protein N5-glutamine methyltransferase family. PrmC subfamily.

It carries out the reaction L-glutaminyl-[peptide chain release factor] + S-adenosyl-L-methionine = N(5)-methyl-L-glutaminyl-[peptide chain release factor] + S-adenosyl-L-homocysteine + H(+). In terms of biological role, methylates the class 1 translation termination release factors RF1/PrfA and RF2/PrfB on the glutamine residue of the universally conserved GGQ motif. This is Release factor glutamine methyltransferase from Gloeobacter violaceus (strain ATCC 29082 / PCC 7421).